The primary structure comprises 157 residues: MPKLMEAGLSAKGKTFALIASRFNDFITDRLVSGAVDALVRNGAADKDIHLVKVPGAFEIPLLAKKMAEKGEYDAIVCLGAVIRGSTPHFDYVCAEVSKGIAQVSLEFSVPVIFGIVTTDTIEQAIERAGTKAGNKGWNAAVSAVEMANLMEVVTRA.

Residues phenylalanine 23, alanine 57–glutamate 59, and alanine 81–isoleucine 83 each bind 5-amino-6-(D-ribitylamino)uracil. Serine 86–threonine 87 is a (2S)-2-hydroxy-3-oxobutyl phosphate binding site. The active-site Proton donor is the histidine 89. Phenylalanine 114 contributes to the 5-amino-6-(D-ribitylamino)uracil binding site. A (2S)-2-hydroxy-3-oxobutyl phosphate-binding site is contributed by arginine 128.

This sequence belongs to the DMRL synthase family.

It catalyses the reaction (2S)-2-hydroxy-3-oxobutyl phosphate + 5-amino-6-(D-ribitylamino)uracil = 6,7-dimethyl-8-(1-D-ribityl)lumazine + phosphate + 2 H2O + H(+). It participates in cofactor biosynthesis; riboflavin biosynthesis; riboflavin from 2-hydroxy-3-oxobutyl phosphate and 5-amino-6-(D-ribitylamino)uracil: step 1/2. Catalyzes the formation of 6,7-dimethyl-8-ribityllumazine by condensation of 5-amino-6-(D-ribitylamino)uracil with 3,4-dihydroxy-2-butanone 4-phosphate. This is the penultimate step in the biosynthesis of riboflavin. The chain is 6,7-dimethyl-8-ribityllumazine synthase from Desulfosudis oleivorans (strain DSM 6200 / JCM 39069 / Hxd3) (Desulfococcus oleovorans).